We begin with the raw amino-acid sequence, 136 residues long: Large ribosomal subunit protein uL16 (136 aa).

It belongs to the universal ribosomal protein uL16 family. Part of the 50S ribosomal subunit.

Its function is as follows. Binds 23S rRNA and is also seen to make contacts with the A and possibly P site tRNAs. The chain is Large ribosomal subunit protein uL16 from Shewanella denitrificans (strain OS217 / ATCC BAA-1090 / DSM 15013).